The primary structure comprises 341 residues: Transcription factor JunD (341 aa).

Positions 21–49 (VAGAAGAPGGGGFAPPGRAFPGAPPTSSM) are disordered. A Menin-binding motif (MBM) motif is present at residues 35–47 (PPGRAFPGAPPTS). The MAP kinase docking motif; essential for its phosphorylation signature appears at 51–60 (KKDALTLSLA). The segment at 65–85 (AGLKPGSATAPSALRPDGAPD) is disordered. Residue S90 is modified to Phosphoserine. S100 carries the phosphoserine; by MAPK8 modification. T117 is subject to Phosphothreonine. Residues 155–176 (AATAATSGAPAPPAPADLAATP) are disordered. 3 positions are modified to phosphoserine: S245, S249, and S253. Residues 262 to 289 (RIKAERKRLRNRIAASKCRKRKLERISR) form a basic motif region. The region spanning 262-325 (RIKAERKRLR…AQLKQKVLSH (64 aa)) is the bZIP domain. A leucine-zipper region spans residues 290 to 318 (LEEKVKTLKSQNTELASTASLLREQVAQL).

This sequence belongs to the bZIP family. Jun subfamily. Heterodimer; binds DNA as a heterodimer. Component of an AP-1 transcription factor complex composed of JUN-FOS heterodimers. As part of the AP-1 transcription factor complex, forms heterodimers with FOS proteins, thereby binding to the AP-1 consensus sequence and stimulating transcription. Forms heterodimers with FOSB; thereby binding to the AP-1 consensus sequence. Interacts (via MBM motif) with MEN1; this interaction represses transcriptional activation. Interacts with MAPK10; this interaction is inhibited in the presence of MEN1. Phosphorylated by MAP kinases MAPK8 and MAPK10; phosphorylation is inhibited in the presence of MEN1.

It is found in the nucleus. Transcription factor binding AP-1 sites. Heterodimerizes with proteins of the FOS family to form an AP-1 transcription factor complex, thereby enhancing their DNA binding activity to an AP-1 consensus sequence 3'-TGA[GC]TCA-5' and enhancing their transcriptional activity. The protein is Transcription factor JunD (Jund) of Rattus norvegicus (Rat).